The chain runs to 465 residues: Cysteine--tRNA ligase 2 (465 aa).

Cysteine 30 lines the Zn(2+) pocket. The 'HIGH' region motif lies at 32–42; it reads ITVYDYCHVGH. 3 residues coordinate Zn(2+): cysteine 214, histidine 239, and glutamate 243. The short motif at 271–275 is the 'KMSKS' region element; sequence KMSKS. Lysine 274 provides a ligand contact to ATP.

Belongs to the class-I aminoacyl-tRNA synthetase family. As to quaternary structure, monomer. The cofactor is Zn(2+).

The protein resides in the cytoplasm. It carries out the reaction tRNA(Cys) + L-cysteine + ATP = L-cysteinyl-tRNA(Cys) + AMP + diphosphate. The protein is Cysteine--tRNA ligase 2 of Burkholderia lata (strain ATCC 17760 / DSM 23089 / LMG 22485 / NCIMB 9086 / R18194 / 383).